Consider the following 248-residue polypeptide: MKSYIEPFIASKALSQNSQKAYRYDLQQFCQLVGERVNQDKLLLYQNSIANLSLSAKKRKLSTANQFLYYLYQIKYLNSYFRLTDTMKVMRTEKQQAAIINTDIFYQKTPFVWGQLISLLILELGLTPSEVAGIEVANLDLSFQMLTLKTKKGVRVLPLSQILIPFLEQQLIGKEVYLFEHRGIPFSRQWFFNHLKTFVRSIGYEGLTAQKLREQFILKEKLAGKSIIELSDILGLKSPVTLEKYYKS.

Residues 1-72 (MKSYIEPFIA…TANQFLYYLY (72 aa)) form the Core-binding (CB) domain. A Tyr recombinase domain is found at 85–248 (DTMKVMRTEK…PVTLEKYYKS (164 aa)). Residues Lys149 and Arg213 contribute to the active site. The O-(3'-phospho-DNA)-tyrosine intermediate role is filled by Tyr245.

It belongs to the 'phage' integrase family. XerD-like subfamily.

Its subcellular location is the cytoplasm. In terms of biological role, putative tyrosine recombinase. Not involved in the cutting and rejoining of the recombining DNA molecules on dif(SL) site. This is Tyrosine recombinase XerD-like from Streptococcus pyogenes serotype M3 (strain ATCC BAA-595 / MGAS315).